A 442-amino-acid polypeptide reads, in one-letter code: Chitinase-like protein Idgf4 (442 aa).

Positions 1–21 (MKLYALFSLLVGSLAIGQISA) are cleaved as a signal peptide. Positions 25-442 (HHLLCYYDGN…PILRQVKSKL (418 aa)) constitute a GH18 domain. Residues Cys29 and Cys56 are joined by a disulfide bond. Asn224 carries an N-linked (GlcNAc...) asparagine glycan. A disulfide bridge links Cys343 with Cys426.

This sequence belongs to the glycosyl hydrolase 18 family. IDGF subfamily. Glycosylated. In terms of tissue distribution, primarily expressed in yolk cells and fat body. In larvae, it is expressed in the imaginal ring, the salivary duct, large salivary gland cells and weakly expressed in imaginal disks. More strongly expressed than Idgf1 and Idgf3.

The protein resides in the secreted. Functionally, cooperates with insulin-like peptides to stimulate the proliferation, polarization and motility of imaginal disk cells. May act by stabilizing the binding of insulin-like peptides to its receptor through a simultaneous interaction with both molecules to form a multiprotein signaling complex. This is Chitinase-like protein Idgf4 (Idgf4) from Drosophila melanogaster (Fruit fly).